Here is a 441-residue protein sequence, read N- to C-terminus: Glutamyl-tRNA reductase (441 aa).

Residues 49 to 52, Ser-110, 115 to 117, and Gln-121 each bind substrate; these read TCNR and EPQ. Residue Cys-50 is the Nucleophile of the active site. Position 190–195 (190–195) interacts with NADP(+); the sequence is GAGEMA.

This sequence belongs to the glutamyl-tRNA reductase family. As to quaternary structure, homodimer.

It carries out the reaction (S)-4-amino-5-oxopentanoate + tRNA(Glu) + NADP(+) = L-glutamyl-tRNA(Glu) + NADPH + H(+). It participates in porphyrin-containing compound metabolism; protoporphyrin-IX biosynthesis; 5-aminolevulinate from L-glutamyl-tRNA(Glu): step 1/2. Catalyzes the NADPH-dependent reduction of glutamyl-tRNA(Glu) to glutamate 1-semialdehyde (GSA). This Sulfurihydrogenibium sp. (strain YO3AOP1) protein is Glutamyl-tRNA reductase.